Reading from the N-terminus, the 540-residue chain is Coiled-coil domain-containing protein 116 (540 aa).

Positions 79–102 (QVLDSLQTVVEQATECVATMKTEA) form a coiled coil. Residues 347–400 (PGNSDLQPSSKASLPTDREARGETCYSPTSASSPKTSHRKSKDRRGSPSNAVQM) are disordered. 2 stretches are compositionally biased toward polar residues: residues 350–359 (SDLQPSSKAS) and 372–381 (YSPTSASSPK). Ser393 is subject to Phosphoserine.

The protein resides in the cytoplasm. The protein localises to the cytoskeleton. Its subcellular location is the microtubule organizing center. It is found in the centrosome. The protein is Coiled-coil domain-containing protein 116 (Ccdc116) of Rattus norvegicus (Rat).